Here is a 235-residue protein sequence, read N- to C-terminus: Carboxymethylenebutenolidase 2 (235 aa).

Active-site residues include cysteine 117, aspartate 173, and histidine 204.

Belongs to the dienelactone hydrolase family. As to quaternary structure, monomer.

It catalyses the reaction 2-(5-oxo-2,5-dihydrofuran-2-ylidene)acetate + H2O = 4-oxohex-2-enedioate + H(+). It participates in aromatic compound metabolism; 3-chlorocatechol degradation. In terms of biological role, ring cleavage of cyclic ester dienelactone to produce maleylacetate. The chain is Carboxymethylenebutenolidase 2 (tfdEII) from Cupriavidus pinatubonensis (strain JMP 134 / LMG 1197) (Cupriavidus necator (strain JMP 134)).